Consider the following 307-residue polypeptide: Olfactory receptor 5M3 (307 aa).

At 1–23 (MLNFTDVTEFILLGLTSRREWQV) the chain is on the extracellular side. N-linked (GlcNAc...) asparagine glycosylation occurs at Asn-3. The chain crosses the membrane as a helical span at residues 24-44 (LFFIIFLVVYIITMVGNIGMM). Residues 45-52 (VLIKVSPQ) lie on the Cytoplasmic side of the membrane. A helical membrane pass occupies residues 53-73 (LNNPMYFFLSHLSFVDVWFSS). At 74 to 97 (NVTPKMLENLLSDKKTITYAGCLV) the chain is on the extracellular side. A disulfide bridge links Cys-95 with Cys-187. Residues 98 to 118 (QCFFFIALVHVEIFILAAMAF) form a helical membrane-spanning segment. At 119-137 (DRYMAIGNPLLYGSKMSRV) the chain is on the cytoplasmic side. A helical membrane pass occupies residues 138-158 (VCIRLITFPYIYGFLTSLAAT). At 159–194 (LWTYGLYFCGKIEINHFYCADPPLIKMACAGTFVKE) the chain is on the extracellular side. A helical membrane pass occupies residues 195–215 (YTMIILAGINFTYSLTVIIIS). Topologically, residues 216–235 (YLFILIAILRMRSAEGRQKA) are cytoplasmic. The helical transmembrane segment at 236–256 (FSTCGSHLTAVIIFYGTLIFM) threads the bilayer. The Extracellular portion of the chain corresponds to 257–269 (YLRRPTEESVEQG). A helical membrane pass occupies residues 270–290 (KMVAVFYTTVIPMLNPMIYSL). The Cytoplasmic portion of the chain corresponds to 291-307 (RNKDVKKAMMKVISRSC).

Belongs to the G-protein coupled receptor 1 family.

It localises to the cell membrane. In terms of biological role, odorant receptor. In Homo sapiens (Human), this protein is Olfactory receptor 5M3 (OR5M3).